The primary structure comprises 365 residues: Cobalt-precorrin-5B C(1)-methyltransferase (365 aa).

Belongs to the CbiD family.

It carries out the reaction Co-precorrin-5B + S-adenosyl-L-methionine = Co-precorrin-6A + S-adenosyl-L-homocysteine. Its pathway is cofactor biosynthesis; adenosylcobalamin biosynthesis; cob(II)yrinate a,c-diamide from sirohydrochlorin (anaerobic route): step 6/10. Its function is as follows. Catalyzes the methylation of C-1 in cobalt-precorrin-5B to form cobalt-precorrin-6A. The sequence is that of Cobalt-precorrin-5B C(1)-methyltransferase from Clostridium perfringens (strain 13 / Type A).